A 236-amino-acid chain; its full sequence is Uridylate kinase (236 aa).

10-13 (KLSG) serves as a coordination point for ATP. G52 contacts UMP. G53 and R57 together coordinate ATP. Residues D72 and 133-140 (TGNPFFTT) contribute to the UMP site. 3 residues coordinate ATP: T160, Y166, and D169.

Belongs to the UMP kinase family. In terms of assembly, homohexamer.

It is found in the cytoplasm. It catalyses the reaction UMP + ATP = UDP + ADP. It participates in pyrimidine metabolism; CTP biosynthesis via de novo pathway; UDP from UMP (UMPK route): step 1/1. Inhibited by UTP. Functionally, catalyzes the reversible phosphorylation of UMP to UDP. In Cupriavidus pinatubonensis (strain JMP 134 / LMG 1197) (Cupriavidus necator (strain JMP 134)), this protein is Uridylate kinase.